Here is a 210-residue protein sequence, read N- to C-terminus: Large ribosomal subunit protein uL3 (210 aa).

Positions 120-143 (FQGNIKKDGQSRGPMGHGSRYHRR) are disordered.

The protein belongs to the universal ribosomal protein uL3 family. Part of the 50S ribosomal subunit. Forms a cluster with proteins L14 and L19.

In terms of biological role, one of the primary rRNA binding proteins, it binds directly near the 3'-end of the 23S rRNA, where it nucleates assembly of the 50S subunit. In Latilactobacillus sakei subsp. sakei (strain 23K) (Lactobacillus sakei subsp. sakei), this protein is Large ribosomal subunit protein uL3.